Here is a 416-residue protein sequence, read N- to C-terminus: Neurotensin receptor type 2 (416 aa).

Topologically, residues 1 to 32 are extracellular; it reads METSSLWPPRPSPSAGLSLEARLGVDTRLWAK. Residues 33–55 form a helical membrane-spanning segment; sequence VLFTALYSLIFALGTAGNALSVH. The Cytoplasmic segment spans residues 56-64; sequence VVLKARAGR. Residues 65–87 form a helical membrane-spanning segment; the sequence is PGRLRYHVLSLALSALLLLLISV. The Extracellular segment spans residues 88–109; it reads PMELYNFVWSHYPWVFGDLGCR. A disulfide bridge links Cys108 with Cys194. The helical transmembrane segment at 110-131 threads the bilayer; the sequence is GYYFVRELCAYATVLSVASLSA. Residues 132 to 154 lie on the Cytoplasmic side of the membrane; the sequence is ERCLAVCQPLRARRLLTPRRTRR. The helical transmembrane segment at 155 to 176 threads the bilayer; that stretch reads LLSLVWVASLGLALPMAVIMGQ. Topologically, residues 177–217 are extracellular; it reads KHEMERADGEPEPASRVCTVLVSRATLQVFIQVNVLVSFVL. Residues 218 to 237 traverse the membrane as a helical segment; the sequence is PLALTAFLNGITVNHLVALY. The Cytoplasmic portion of the chain corresponds to 238–297; the sequence is SQVPSASAQVNSIPSRLELLSEEGLLGFITWRKTLSLGVQASLVRHKDASQIRSLQHSAQ. The chain crosses the membrane as a helical span at residues 298–318; it reads VLRAIVAVYVICWLPYHARRL. Residues 319 to 337 lie on the Extracellular side of the membrane; the sequence is MYCYIPDDGWTDELYDFYH. A helical membrane pass occupies residues 338-358; sequence YFYMVTNTLFYVSSAVTPVLY. The Cytoplasmic segment spans residues 359-416; the sequence is NAVSSSFRKLFLESLSSLCGEQRSVVPLPQEAPESTTSTYSFRLWGSPRNPSLGEIQV. A lipid anchor (S-palmitoyl cysteine) is attached at Cys377. Position 410 is a phosphoserine (Ser410).

The protein belongs to the G-protein coupled receptor 1 family. Neurotensin receptor subfamily. NTSR2 sub-subfamily. As to expression, expressed maximally in the cerebellum, hippocampus, piriform cortex and neocortex of adult brain.

It localises to the cell membrane. Receptor for the tridecapeptide neurotensin. It is associated with G proteins that activate a phosphatidylinositol-calcium second messenger system. This chain is Neurotensin receptor type 2 (Ntsr2), found in Mus musculus (Mouse).